The chain runs to 127 residues: Putative lipoprotein LprJ (127 aa).

The N-terminal stretch at 1-34 (MTAHTHDGTRTWRTGRQATTLLALLAGVFGGAAS) is a signal peptide. A lipid anchor (N-palmitoyl cysteine) is attached at Cys35. Cys35 carries S-diacylglycerol cysteine lipidation. Topologically, residues 35–99 (CAAPIQADMM…MAEINGMSRD (65 aa)) are extracellular. The chain crosses the membrane as a helical span at residues 100 to 120 (MASTFTIVAIGTYCPAVIAPL). Residues 121–127 (MPNRLQA) lie on the Cytoplasmic side of the membrane.

As to quaternary structure, may interact with sensor protein KdpD. Modified by Lgt on Cys-35 with an S-linked diacylglycerol, signal peptide is removed by LspA, modified by Lnt with amide-linked fatty acid.

The protein localises to the cell membrane. Its function is as follows. Overexpression induces expression of sensor protein kdpD gene at low K(+) concentrations (0 and 250 uM, tested in M.smegatis). This is Putative lipoprotein LprJ (lprJ) from Mycobacterium tuberculosis (strain ATCC 25618 / H37Rv).